We begin with the raw amino-acid sequence, 83 residues long: Mitochondrial import inner membrane translocase subunit Tim8 (83 aa).

A Twin CX3C motif motif is present at residues 35–60; that stretch reads CWDVCFADYRPPSKMDGKTQTCIQNC. Intrachain disulfides connect cysteine 35/cysteine 60 and cysteine 39/cysteine 56.

This sequence belongs to the small Tim family. Heterohexamer; composed of 3 copies of ddp-1/tim-8 and 3 copies of tin-13/tim-13, named soluble 70 kDa complex. Associates with the TIM22 complex, whose core is composed of tim-22.

The protein resides in the mitochondrion inner membrane. Mitochondrial intermembrane chaperone that participates in the import and insertion of some multi-pass transmembrane proteins into the mitochondrial inner membrane. Also required for the transfer of beta-barrel precursors from the TOM complex to the sorting and assembly machinery (SAM complex) of the outer membrane. Acts as a chaperone-like protein that protects the hydrophobic precursors from aggregation and guide them through the mitochondrial intermembrane space. The ddp-1/tim-8-tim-13 complex mediates the import of some proteins while the predominant tim-9/tin-9.1-tim-10/tin-10 70 kDa complex mediates the import of much more proteins. The polypeptide is Mitochondrial import inner membrane translocase subunit Tim8 (Caenorhabditis elegans).